Consider the following 537-residue polypeptide: CTP synthase (537 aa).

An amidoligase domain region spans residues 1-269 (MNQTKYIFVT…DKVALKKLDL (269 aa)). A CTP-binding site is contributed by S15. S15 contacts UTP. 16–21 (SLGKGI) provides a ligand contact to ATP. Residue Y56 participates in L-glutamine binding. ATP is bound at residue D73. Positions 73 and 143 each coordinate Mg(2+). CTP-binding positions include 150–152 (DIE), 190–195 (KTKPTQ), and K226. UTP contacts are provided by residues 190–195 (KTKPTQ) and K226. One can recognise a Glutamine amidotransferase type-1 domain in the interval 295–537 (SIGLVGKYVE…IAAAVKHKNK (243 aa)). L-glutamine is bound at residue G357. C384 (nucleophile; for glutamine hydrolysis) is an active-site residue. Residues 385-388 (LGMQ), E408, and R465 contribute to the L-glutamine site. Residues H510 and E512 contribute to the active site.

This sequence belongs to the CTP synthase family. Homotetramer.

The enzyme catalyses UTP + L-glutamine + ATP + H2O = CTP + L-glutamate + ADP + phosphate + 2 H(+). The catalysed reaction is L-glutamine + H2O = L-glutamate + NH4(+). It carries out the reaction UTP + NH4(+) + ATP = CTP + ADP + phosphate + 2 H(+). The protein operates within pyrimidine metabolism; CTP biosynthesis via de novo pathway; CTP from UDP: step 2/2. Its activity is regulated as follows. Allosterically activated by GTP, when glutamine is the substrate; GTP has no effect on the reaction when ammonia is the substrate. The allosteric effector GTP functions by stabilizing the protein conformation that binds the tetrahedral intermediate(s) formed during glutamine hydrolysis. Inhibited by the product CTP, via allosteric rather than competitive inhibition. Catalyzes the ATP-dependent amination of UTP to CTP with either L-glutamine or ammonia as the source of nitrogen. Regulates intracellular CTP levels through interactions with the four ribonucleotide triphosphates. The sequence is that of CTP synthase from Flavobacterium psychrophilum (strain ATCC 49511 / DSM 21280 / CIP 103535 / JIP02/86).